Reading from the N-terminus, the 1152-residue chain is Calcium-activated potassium channel subunit alpha-1 (1152 aa).

The disordered stretch occupies residues 1-37; the sequence is MSSNIHANHLSLDASSSSSSSSSSSSSSSSSSSSVHE. Over 1 to 60 the chain is Extracellular; sequence MSSNIHANHLSLDASSSSSSSSSSSSSSSSSSSSVHEPKMDALIIPVTMEVPCDSRGQRM. Residues 15-34 are compositionally biased toward low complexity; sequence SSSSSSSSSSSSSSSSSSSS. The helical transmembrane segment at 61–81 threads the bilayer; that stretch reads WWAFLASSMVTFFGGLFIILL. At 82–152 the chain is on the cytoplasmic side; the sequence is WRTLKYLWTV…MISAQTLTGR (71 aa). S-palmitoyl cysteine attachment occurs at residues C92, C93, and C95. Residues 153–173 traverse the membrane as a helical segment; sequence VLVVLVFALSIGALVIYFIDS. At 174–188 the chain is on the extracellular side; that stretch reads SNPIESCQNFYKDFT. Residues 189 to 209 traverse the membrane as a helical segment; sequence LQIDMAFNVFFLLYFGLRFIA. At 210–213 the chain is on the cytoplasmic side; that stretch reads ANDK. The helical transmembrane segment at 214-234 threads the bilayer; it reads LWFWLEVNSVVDFFTVPPVFV. At 235–238 the chain is on the extracellular side; the sequence is SVYL. A helical; Voltage-sensor transmembrane segment spans residues 239–259; sequence NRSWLGLRFLRALRLIQFSEI. Residues 260–274 are Cytoplasmic-facing; it reads LQFLNILKTSNSIKL. The chain crosses the membrane as a helical span at residues 275–295; sequence VNLLSIFISTWLTAAGFIHLV. The Extracellular portion of the chain corresponds to 296–309; that stretch reads ENSGDPWENFQNNQ. Residues 310 to 332 constitute an intramembrane region (pore-forming); it reads ALTYWECVYLLMVTMSTVGYGDV. A Selectivity for potassium motif is present at residues 326–329; it reads TVGY. The Extracellular segment spans residues 333 to 341; the sequence is YAKTTLGRL. The helical transmembrane segment at 342-362 threads the bilayer; sequence FMVFFILGGLAMFASYVPEII. The Cytoplasmic portion of the chain corresponds to 363–1152; that stretch reads ELIGNRKKYG…KQKYVQEERL (790 aa). Positions 381 to 523 constitute an RCK N-terminal 1 domain; it reads RKHIVVCGHI…WNWKEGDDAI (143 aa). Mg(2+)-binding residues include E413, Q436, and E438. The segment S7 stretch occupies residues 530 to 550; that stretch reads LGFIAQSCLAQGLSTMLANLF. The segment at 587–607 is segment S8; the sequence is LSFPTVCELCFVKLKLLMIAI. The segment at 651-655 is heme-binding motif; it reads CKACH. The segment at 675–703 is disordered; that stretch reads EQPSTLSPKKKQRNGGMRNSPSSSPKLMR. Phosphothreonine is present on T679. Phosphoserine is present on residues S681, S694, and S698. The tract at residues 753–773 is segment S9; it reads VLSGHVVVCIFGDVSSALIGL. One can recognise an RCK N-terminal 2 domain in the interval 755-899; that stretch reads SGHVVVCIFG…MDRSSPDNSP (145 aa). Residue T886 is modified to Phosphothreonine. Phosphoserine occurs at positions 894 and 898. Positions 919 to 941 match the Calcium bowl motif; the sequence is TELVNDTNVQFLDQDDDDDPDTE. Ca(2+)-binding residues include Q928, D931, D934, and D936. The segment at 948-968 is segment S10; the sequence is FACGTAFAVSVLDSLMSATYF. Residues 1102 to 1127 show a composition bias toward low complexity; the sequence is RASLSHSSHSSQSSSKKSSSVHSIPS. The tract at residues 1102–1152 is disordered; sequence RASLSHSSHSSQSSSKKSSSVHSIPSTANRQNRPKSRESRDKQKYVQEERL. Residues 1136–1152 are compositionally biased toward basic and acidic residues; that stretch reads KSRESRDKQKYVQEERL. 2 positions are modified to phosphoserine: S1137 and S1140.

The protein belongs to the potassium channel family. Calcium-activated (TC 1.A.1.3) subfamily. KCa1.1/KCNMA1 sub-subfamily. In terms of assembly, homotetramer; which constitutes the calcium-activated potassium channel. Interacts with beta subunits KCNMB1, KCNMB2, KCNMB3 and KCNMB4. Interacts with gamma subunits LRRC26, LRRC38, LRRC52 and LRRC55. Beta and gamma subunits are accessory, and modulate its activity. Interacts with RAB11B. In terms of processing, phosphorylated. Phosphorylation by kinases such as PKA and/or PKG. In smooth muscles, phosphorylation affects its activity. Post-translationally, palmitoylation by ZDHHC22 and ZDHHC23 within the intracellular linker between the S0 and S1 transmembrane domains regulates localization to the plasma membrane. Depalmitoylated by LYPLA1 and LYPLAL1, leading to retard exit from the trans-Golgi network.

It is found in the cell membrane. The enzyme catalyses K(+)(in) = K(+)(out). Ethanol and carbon monoxide-bound heme increase channel activation. Heme inhibits channel activation. Potassium channel activated by both membrane depolarization or increase in cytosolic Ca(2+) that mediates export of K(+). It is also activated by the concentration of cytosolic Mg(2+). Its activation dampens the excitatory events that elevate the cytosolic Ca(2+) concentration and/or depolarize the cell membrane. It therefore contributes to repolarization of the membrane potential. Plays a key role in controlling excitability in a number of systems, such as regulation of the contraction of smooth muscle, the tuning of hair cells in the cochlea, regulation of transmitter release, and innate immunity. In smooth muscles, its activation by high level of Ca(2+), caused by ryanodine receptors in the sarcoplasmic reticulum, regulates the membrane potential. In cochlea cells, its number and kinetic properties partly determine the characteristic frequency of each hair cell and thereby helps to establish a tonotopic map. Kinetics of KCNMA1 channels are determined by alternative splicing, phosphorylation status and its combination with modulating beta subunits. Highly sensitive to both iberiotoxin (IbTx) and charybdotoxin (CTX). The protein is Calcium-activated potassium channel subunit alpha-1 (KCNMA1) of Sus scrofa (Pig).